Here is a 223-residue protein sequence, read N- to C-terminus: Glycolipid transfer protein 2 (223 aa).

Positions 69, 73, 116, and 155 each coordinate a ganglioside GM3 (d18:1(4E)).

Belongs to the GLTP family.

In terms of biological role, transfers glycolipids in vitro. This Arabidopsis thaliana (Mouse-ear cress) protein is Glycolipid transfer protein 2.